The chain runs to 263 residues: 3-deoxy-manno-octulosonate cytidylyltransferase (263 aa).

This sequence belongs to the KdsB family.

Its subcellular location is the cytoplasm. It catalyses the reaction 3-deoxy-alpha-D-manno-oct-2-ulosonate + CTP = CMP-3-deoxy-beta-D-manno-octulosonate + diphosphate. It functions in the pathway nucleotide-sugar biosynthesis; CMP-3-deoxy-D-manno-octulosonate biosynthesis; CMP-3-deoxy-D-manno-octulosonate from 3-deoxy-D-manno-octulosonate and CTP: step 1/1. Its pathway is bacterial outer membrane biogenesis; lipopolysaccharide biosynthesis. In terms of biological role, activates KDO (a required 8-carbon sugar) for incorporation into bacterial lipopolysaccharide in Gram-negative bacteria. The polypeptide is 3-deoxy-manno-octulosonate cytidylyltransferase (Burkholderia cenocepacia (strain ATCC BAA-245 / DSM 16553 / LMG 16656 / NCTC 13227 / J2315 / CF5610) (Burkholderia cepacia (strain J2315))).